A 335-amino-acid chain; its full sequence is Phosphate acyltransferase (335 aa).

Belongs to the PlsX family. In terms of assembly, homodimer. Probably interacts with PlsY.

The protein resides in the cytoplasm. It catalyses the reaction a fatty acyl-[ACP] + phosphate = an acyl phosphate + holo-[ACP]. It functions in the pathway lipid metabolism; phospholipid metabolism. Catalyzes the reversible formation of acyl-phosphate (acyl-PO(4)) from acyl-[acyl-carrier-protein] (acyl-ACP). This enzyme utilizes acyl-ACP as fatty acyl donor, but not acyl-CoA. The chain is Phosphate acyltransferase from Streptococcus suis (strain 98HAH33).